A 264-amino-acid chain; its full sequence is Phosphoribosylaminoimidazole-succinocarboxamide synthase (264 aa).

This sequence belongs to the SAICAR synthetase family.

It carries out the reaction 5-amino-1-(5-phospho-D-ribosyl)imidazole-4-carboxylate + L-aspartate + ATP = (2S)-2-[5-amino-1-(5-phospho-beta-D-ribosyl)imidazole-4-carboxamido]succinate + ADP + phosphate + 2 H(+). It participates in purine metabolism; IMP biosynthesis via de novo pathway; 5-amino-1-(5-phospho-D-ribosyl)imidazole-4-carboxamide from 5-amino-1-(5-phospho-D-ribosyl)imidazole-4-carboxylate: step 1/2. The polypeptide is Phosphoribosylaminoimidazole-succinocarboxamide synthase (purC) (Synechocystis sp. (strain ATCC 27184 / PCC 6803 / Kazusa)).